The following is an 84-amino-acid chain: MAVKRAPSKKVRAEQARRPKKNPLIAAGIETVDYKDVNLLRTFISDRGKIRSRRVTGLTPQQQRQVAVAVKNAREMALLPFTSR.

Over residues 1 to 10 the composition is skewed to basic residues; sequence MAVKRAPSKK. Residues 1–20 form a disordered region; that stretch reads MAVKRAPSKKVRAEQARRPK.

This sequence belongs to the bacterial ribosomal protein bS18 family. As to quaternary structure, part of the 30S ribosomal subunit. Forms a tight heterodimer with protein bS6.

Binds as a heterodimer with protein bS6 to the central domain of the 16S rRNA, where it helps stabilize the platform of the 30S subunit. The sequence is that of Small ribosomal subunit protein bS18B from Nocardia farcinica (strain IFM 10152).